The primary structure comprises 186 residues: Dihydrofolate reductase (186 aa).

One can recognise a DHFR domain in the interval 3–183 (KFSLIVAVCA…IQYQYRIYEK (181 aa)). NADP(+) contacts are provided by residues Ala9 and 15 to 21 (GIGIKGD). 29–34 (ELKYFS) serves as a coordination point for substrate. 53 to 55 (RKT) is an NADP(+) binding site. Residue Arg69 coordinates substrate. Residues 75–77 (TRD) and 116–123 (GGNAVYKE) each bind NADP(+).

This sequence belongs to the dihydrofolate reductase family.

It carries out the reaction (6S)-5,6,7,8-tetrahydrofolate + NADP(+) = 7,8-dihydrofolate + NADPH + H(+). It functions in the pathway cofactor biosynthesis; tetrahydrofolate biosynthesis; 5,6,7,8-tetrahydrofolate from 7,8-dihydrofolate: step 1/1. Its function is as follows. Key enzyme in folate metabolism. Catalyzes an essential reaction for de novo glycine and purine synthesis, and for DNA precursor synthesis. The sequence is that of Dihydrofolate reductase (DHFR) from Aedes albopictus (Asian tiger mosquito).